Reading from the N-terminus, the 151-residue chain is Chaperonin GroEL (151 aa).

Residue 41–45 (DGTTT) participates in ATP binding.

The protein belongs to the chaperonin (HSP60) family. As to quaternary structure, forms a cylinder of 14 subunits composed of two heptameric rings stacked back-to-back. Interacts with the co-chaperonin GroES.

It is found in the cytoplasm. The catalysed reaction is ATP + H2O + a folded polypeptide = ADP + phosphate + an unfolded polypeptide.. Functionally, together with its co-chaperonin GroES, plays an essential role in assisting protein folding. The GroEL-GroES system forms a nano-cage that allows encapsulation of the non-native substrate proteins and provides a physical environment optimized to promote and accelerate protein folding. The chain is Chaperonin GroEL from Mycobacteroides chelonae (Mycobacterium chelonae).